Here is a 302-residue protein sequence, read N- to C-terminus: RELT-like protein 2 (302 aa).

A helical membrane pass occupies residues 15 to 35 (LYMLFLLVLVFFLMGLVGFMI). 4 disordered regions span residues 47–68 (RTSR…DDVN), 135–164 (CSRS…TTVF), 177–212 (RYGL…GQPR), and 247–302 (VPCT…AGGM). Ser52 bears the Phosphoserine mark. Composition is skewed to basic and acidic residues over residues 148 to 158 (RSKEGKGRPRP) and 177 to 188 (RYGLHEHRDGSP). Residues 277-294 (QEANGQPTKLDTSGQQDS) show a composition bias toward polar residues.

It belongs to the RELT family. In terms of assembly, interacts with RELT, RELL1, OXSR1, PLSCR1 and TRAF2.

It localises to the cell membrane. Induces activation of MAPK14/p38 cascade, when overexpressed. Induces apoptosis, when overexpressed. The polypeptide is RELT-like protein 2 (Rell2) (Rattus norvegicus (Rat)).